A 413-amino-acid chain; its full sequence is MTDPTTEIDVDLDVQEILLAASQHDIPKLRQLIRSNQTIANPVNVKDPETGYAPLHAAIAACEPDDEEPNGVQTNGEQGDEQKSVEEKGSATVRFLLQEGAIWNDLDNNNETPGCVARRLGLTELYEQLVDAGVRAELLLNRLDGYEELEDDDEEEEEGQEEQTGTEEVEVEGESAPQLVEATTTTETAMETGPDVTNSRYLDSNLTFQNDRLLDQDQNGVMMAWETDIMAKSAKKLLPTSGLRVLNVGHGMGIVDGFIQEQSPAEHHIIEAHPEVVAEMKRKGWGEKPGVTIHEGRWQDILPDLVGQGVMFDAIYYDTFAESYGDFREFFSEQVIGLLEQEGKWSFFNGMGADRQISYDVYQKVAEMDLMDAGFDVEWEEIALPKLDNEWDGVRRAYWQIESYRLPLCKYMD.

Disordered regions lie at residues 65-85 and 148-178; these read DDEE…QKSV and ELED…SAPQ. Residues 148–173 show a composition bias toward acidic residues; sequence ELEDDDEEEEEGQEEQTGTEEVEVEG. The RMT2 domain occupies 192 to 413; the sequence is TGPDVTNSRY…YRLPLCKYMD (222 aa). S-adenosyl-L-methionine contacts are provided by residues Y201, M230, 250–255, 271–273, 298–299, and D318; these read HGMGIV, EAH, and WQ.

It belongs to the class I-like SAM-binding methyltransferase superfamily. RMT2 methyltransferase family. Monomer.

Its subcellular location is the cytoplasm. It is found in the nucleus. Its function is as follows. S-adenosyl-L-methionine-dependent protein-arginine N-methyltransferase that methylates the delta-nitrogen atom of arginine residues to form N5-methylarginine (type IV) in target proteins. Monomethylates ribosomal protein L12. This chain is Protein arginine N-methyltransferase 2, found in Aspergillus oryzae (strain ATCC 42149 / RIB 40) (Yellow koji mold).